Here is a 1148-residue protein sequence, read N- to C-terminus: Minor outer capsid protein P2 (1148 aa).

In terms of domain architecture, PPPDE spans 930–1148 (QDGTANIFQK…QYIQSIYDEL (219 aa)). Catalysis depends on residues histidine 954 and cysteine 1111.

It belongs to the phytoreovirus minor outer capsid protein P2 family.

Its subcellular location is the virion. The protein localises to the host cytoplasm. Minor capsid protein present in the outer capsid, which is required for adsorption of the virus onto host insect cells. This chain is Minor outer capsid protein P2, found in Nephotettix cincticeps (Green rice leafhopper).